A 258-amino-acid polypeptide reads, in one-letter code: Thiazole synthase (258 aa).

Lysine 97 (schiff-base intermediate with DXP) is an active-site residue. 1-deoxy-D-xylulose 5-phosphate is bound by residues glycine 158, 184 to 185 (AG), and 206 to 207 (NT).

The protein belongs to the ThiG family. As to quaternary structure, homotetramer. Forms heterodimers with either ThiH or ThiS.

The protein resides in the cytoplasm. The catalysed reaction is [ThiS sulfur-carrier protein]-C-terminal-Gly-aminoethanethioate + 2-iminoacetate + 1-deoxy-D-xylulose 5-phosphate = [ThiS sulfur-carrier protein]-C-terminal Gly-Gly + 2-[(2R,5Z)-2-carboxy-4-methylthiazol-5(2H)-ylidene]ethyl phosphate + 2 H2O + H(+). The protein operates within cofactor biosynthesis; thiamine diphosphate biosynthesis. In terms of biological role, catalyzes the rearrangement of 1-deoxy-D-xylulose 5-phosphate (DXP) to produce the thiazole phosphate moiety of thiamine. Sulfur is provided by the thiocarboxylate moiety of the carrier protein ThiS. In vitro, sulfur can be provided by H(2)S. This Marinomonas sp. (strain MWYL1) protein is Thiazole synthase.